Reading from the N-terminus, the 1653-residue chain is Protein strawberry notch (1653 aa).

Disordered stretches follow at residues 1 to 46 (MTSK…GRDL), 190 to 211 (GSPA…GGAI), 237 to 265 (GSNA…PNPG), 317 to 345 (NNQK…VKGN), and 883 to 1043 (SVAD…PSGS). Acidic residues predominate over residues 11 to 36 (DADDDNDNFDEDDSGSDFDDDEDPDQ). A phosphoserine mark is found at serine 24 and serine 26. Residues 194 to 205 (ARSSGNAGTTGS) are compositionally biased toward polar residues. A compositionally biased stretch (low complexity) spans 256–265 (SPTGGIPNPG). The segment covering 329 to 342 (GSGGPAGGAPGSGV) has biased composition (gly residues). Residues 883 to 901 (SVADSTSSLSNNSNITTAA) show a composition bias toward low complexity. 2 positions are modified to phosphoserine: serine 929 and serine 931. Positions 966–975 (IDDEDEDHDV) are enriched in acidic residues. Polar residues predominate over residues 980 to 998 (RSVASDASSDFNPFFSGSD). Basic residues predominate over residues 1008 to 1027 (RSKKSKKAQKKSKKKVKKEK). Residues 1064-1125 (LSTQDKIQDL…RKIERLGARL (62 aa)) are a coiled coil.

Belongs to the SBNO family. Interacts with vg for function in the wing disk. Interacts with Su(H) for function in the eye disk. In terms of tissue distribution, at stage 8, when the formation of the midline precursor cells depends on Notch signaling, high level of expression is seen in the midline precursor cells and a lower level in the surrounding epidermal cells. Between stages 11 and 14, expression is uniform throughout the epidermis, and at stage 16, high level of expression is restricted to the central nervous system. Expressed in the larval leg, wing and eye imaginal disks. Expression is over the wing disk and accumulates within the pleural region.

The protein resides in the nucleus. Notch pathway component, may contribute to the specificity between lateral and inductive Notch signaling pathways in the wing disk. Required during many developmental stages including oogenesis, embryogenesis and imaginal development of the eye, wing and leg. Ebi and sno regulate EGFR-dependent Delta transcription in the developing eye, by antagonizing a repressor function of Suppressor of Hairless (Su(H)). They are required in the R-cells for normal cone cell development. In Drosophila melanogaster (Fruit fly), this protein is Protein strawberry notch.